The sequence spans 291 residues: Glycine--tRNA ligase alpha subunit (291 aa).

This sequence belongs to the class-II aminoacyl-tRNA synthetase family. In terms of assembly, tetramer of two alpha and two beta subunits.

It is found in the cytoplasm. It carries out the reaction tRNA(Gly) + glycine + ATP = glycyl-tRNA(Gly) + AMP + diphosphate. In Coprothermobacter proteolyticus (strain ATCC 35245 / DSM 5265 / OCM 4 / BT), this protein is Glycine--tRNA ligase alpha subunit.